The sequence spans 467 residues: tRNA modification GTPase MnmE (467 aa).

Residues arginine 27, glutamate 89, and arginine 128 each coordinate (6S)-5-formyl-5,6,7,8-tetrahydrofolate. Positions 225-387 (GISMVIAGRP…LKQAIFTVVT (163 aa)) constitute a TrmE-type G domain. Asparagine 235 lines the K(+) pocket. GTP contacts are provided by residues 235–240 (NVGKSS), 254–260 (TSIAGTT), 279–282 (DTAG), and 368–370 (SAR). Residue serine 239 participates in Mg(2+) binding. Residues threonine 254, isoleucine 256, and threonine 259 each coordinate K(+). Threonine 260 is a Mg(2+) binding site. Lysine 467 provides a ligand contact to (6S)-5-formyl-5,6,7,8-tetrahydrofolate.

The protein belongs to the TRAFAC class TrmE-Era-EngA-EngB-Septin-like GTPase superfamily. TrmE GTPase family. Homodimer. Heterotetramer of two MnmE and two MnmG subunits. The cofactor is K(+).

The protein localises to the cytoplasm. In terms of biological role, exhibits a very high intrinsic GTPase hydrolysis rate. Involved in the addition of a carboxymethylaminomethyl (cmnm) group at the wobble position (U34) of certain tRNAs, forming tRNA-cmnm(5)s(2)U34. In Desulfotalea psychrophila (strain LSv54 / DSM 12343), this protein is tRNA modification GTPase MnmE.